A 215-amino-acid polypeptide reads, in one-letter code: uncharacterized protein (215 aa).

This is an uncharacterized protein from Saccharomyces cerevisiae (strain ATCC 204508 / S288c) (Baker's yeast).